We begin with the raw amino-acid sequence, 230 residues long: ATP-dependent dethiobiotin synthetase BioD (230 aa).

12–17 provides a ligand contact to ATP; the sequence is DVGKTV. Thr-16 is a binding site for Mg(2+). Lys-37 is an active-site residue. Thr-41 is a substrate binding site. Residues Asp-49, 108-111, 168-169, and 198-200 each bind ATP; these read EGAG, GS, and PEG. Mg(2+) contacts are provided by Asp-49 and Glu-108.

It belongs to the dethiobiotin synthetase family. Homodimer. Mg(2+) serves as cofactor.

It is found in the cytoplasm. It catalyses the reaction (7R,8S)-7,8-diammoniononanoate + CO2 + ATP = (4R,5S)-dethiobiotin + ADP + phosphate + 3 H(+). It participates in cofactor biosynthesis; biotin biosynthesis; biotin from 7,8-diaminononanoate: step 1/2. Functionally, catalyzes a mechanistically unusual reaction, the ATP-dependent insertion of CO2 between the N7 and N8 nitrogen atoms of 7,8-diaminopelargonic acid (DAPA, also called 7,8-diammoniononanoate) to form a ureido ring. In Corynebacterium kroppenstedtii (strain DSM 44385 / JCM 11950 / CIP 105744 / CCUG 35717), this protein is ATP-dependent dethiobiotin synthetase BioD.